The following is a 258-amino-acid chain: Small ribosomal subunit protein uS2 (258 aa).

This sequence belongs to the universal ribosomal protein uS2 family.

This Leuconostoc mesenteroides subsp. mesenteroides (strain ATCC 8293 / DSM 20343 / BCRC 11652 / CCM 1803 / JCM 6124 / NCDO 523 / NBRC 100496 / NCIMB 8023 / NCTC 12954 / NRRL B-1118 / 37Y) protein is Small ribosomal subunit protein uS2.